The sequence spans 210 residues: MASGVFGTPISAQTVIATGEYKEPITQKDVADYAMKMINAGGKDVNAQKFVDNLKERYGNGIAVKCLLYNATGATLNFAKYNDWHGHIYDTPYPSDIQNGQWGAFLHVHPSGAAAGSAGAVVYRSKIPSSSSSCDWLFSWTVPYIGGNGVYTEIREEGHYPSVGSWDYIYNVKLKNSSVTSIDSNYGYVSKADIGEGTTMNARGVFEFPY.

Belongs to the jasmonate-induced protein family.

This chain is 23 kDa jasmonate-induced protein, found in Hordeum vulgare (Barley).